Here is a 131-residue protein sequence, read N- to C-terminus: Ribosome-binding factor A (131 aa).

The protein belongs to the RbfA family. Monomer. Binds 30S ribosomal subunits, but not 50S ribosomal subunits or 70S ribosomes.

It localises to the cytoplasm. One of several proteins that assist in the late maturation steps of the functional core of the 30S ribosomal subunit. Associates with free 30S ribosomal subunits (but not with 30S subunits that are part of 70S ribosomes or polysomes). Required for efficient processing of 16S rRNA. May interact with the 5'-terminal helix region of 16S rRNA. This Chromohalobacter salexigens (strain ATCC BAA-138 / DSM 3043 / CIP 106854 / NCIMB 13768 / 1H11) protein is Ribosome-binding factor A.